The following is a 190-amino-acid chain: MYVAMIIRKYFLIIALLVMPWLAIPSVSAADKGWFNTFTDNVAETWRQPEYYDLYVPAITWHARFAYDKEKTDRYNERPWGVGFGQSRWDDKGNWHGLYMMAFKDSFNKWEPIGGYGWEKTWRPLEDDNFRLGLGFTAGVTARDNWNYIPIPVLLPLASIGYGPATFQMTYIPGSYNNGNVYFAWMRFQF.

Positions 1 to 29 are cleaved as a signal peptide; the sequence is MYVAMIIRKYFLIIALLVMPWLAIPSVSA. Active-site residues include H62, D105, and S106.

The protein belongs to the lipid A palmitoyltransferase family. In terms of assembly, homodimer.

The protein resides in the cell outer membrane. The enzyme catalyses a lipid A + a 1,2-diacyl-sn-glycero-3-phosphocholine = a hepta-acyl lipid A + a 2-acyl-sn-glycero-3-phosphocholine. It carries out the reaction a lipid IVA + a 1,2-diacyl-sn-glycero-3-phosphocholine = a lipid IVB + a 2-acyl-sn-glycero-3-phosphocholine. The catalysed reaction is a lipid IIA + a 1,2-diacyl-sn-glycero-3-phosphocholine = a lipid IIB + a 2-acyl-sn-glycero-3-phosphocholine. Functionally, transfers a fatty acid residue from the sn-1 position of a phospholipid to the N-linked hydroxyfatty acid chain on the proximal unit of lipid A or its precursors. In Salmonella typhi, this protein is Lipid A acyltransferase PagP.